The primary structure comprises 378 residues: mRNA cap guanine-N(7) methyltransferase (378 aa).

Residues 24–331 (SRIFFMRNMN…MYLVFGFRKK (308 aa)) form the mRNA cap 0 methyltransferase domain. 33–34 (NN) contacts mRNA. Residues lysine 37, alanine 62, aspartate 84, aspartate 116, glutamine 138, and tyrosine 143 each contribute to the S-adenosyl-L-methionine site. Composition is skewed to basic and acidic residues over residues 335–347 (EKNL…EIKK) and 356–378 (DTDK…PSHC). Residues 335–378 (EKNLESEAPEIKKVTPVPLNEDTDKTAEKNEERIEEKEENPSHC) are disordered.

This sequence belongs to the class I-like SAM-binding methyltransferase superfamily. mRNA cap 0 methyltransferase family.

Its subcellular location is the nucleus. It carries out the reaction a 5'-end (5'-triphosphoguanosine)-ribonucleoside in mRNA + S-adenosyl-L-methionine = a 5'-end (N(7)-methyl 5'-triphosphoguanosine)-ribonucleoside in mRNA + S-adenosyl-L-homocysteine. Its function is as follows. mRNA-capping methyltransferase that methylates the N7 position of the added guanosine to the 5'-cap structure of mRNAs. Binds RNA containing 5'-terminal GpppC. The sequence is that of mRNA cap guanine-N(7) methyltransferase from Caenorhabditis briggsae.